The chain runs to 617 residues: MSDIIQLLPDHVANQIAAGEVVQRPASVIKELLENSIDAKASRIQVVIKDAGKTLIQIVDDGIGMSLTDARMSFERHATSKIKLADDLFSLKTKGFRGEALASIAAIAHVELRTKTENDEVGTCLKVEGSEVVSQDAFVTPKGTSISVKNLFYNIPARRNFLKSDNVETRHIIDEFQRVALAHPNISFSLLHNGNELFQLPITNFRQRITNILGGKTNEKLVPVEEDTEIAKISGFVGKPEFAKKSRGEQFFFVNDRFIKSPYLNHAVTASFEGLLKDKSYPSYFLYLEVDPKSIDINIHPTKTEIKFDDEHALYAILKSSIKHSLGQFNVAPILDFERDSELDTPYDYKNKEADAPQVEVDRNFNPFQNEGSSKTQFSGGTNFRKDKPAEWESIYSGMQSETDTDIDIRHIEFESEEVTGNLFGAREEQTEKSTFQVQKKYIVSTLKSGILVIDQHRAHTRVLYEELLKNITVSSAVSQQLLFPLLLQFNSHEVEMLKEIKDSLEQTGFVFSSIKKEEVEISGIPTLISESEVEILLEQLIADFEKDVPDNGFSQTDLLAKSLANSMAVRSGTLLNSAEQQHIVNRLFACKEPALSPFNKTVFTTLSVDELDKKFA.

The protein belongs to the DNA mismatch repair MutL/HexB family.

In terms of biological role, this protein is involved in the repair of mismatches in DNA. It is required for dam-dependent methyl-directed DNA mismatch repair. May act as a 'molecular matchmaker', a protein that promotes the formation of a stable complex between two or more DNA-binding proteins in an ATP-dependent manner without itself being part of a final effector complex. The sequence is that of DNA mismatch repair protein MutL from Christiangramia forsetii (strain DSM 17595 / CGMCC 1.15422 / KT0803) (Gramella forsetii).